The sequence spans 343 residues: S-adenosylmethionine:tRNA ribosyltransferase-isomerase (343 aa).

The protein belongs to the QueA family. Monomer.

It is found in the cytoplasm. It carries out the reaction 7-aminomethyl-7-carbaguanosine(34) in tRNA + S-adenosyl-L-methionine = epoxyqueuosine(34) in tRNA + adenine + L-methionine + 2 H(+). It participates in tRNA modification; tRNA-queuosine biosynthesis. In terms of biological role, transfers and isomerizes the ribose moiety from AdoMet to the 7-aminomethyl group of 7-deazaguanine (preQ1-tRNA) to give epoxyqueuosine (oQ-tRNA). This Geotalea uraniireducens (strain Rf4) (Geobacter uraniireducens) protein is S-adenosylmethionine:tRNA ribosyltransferase-isomerase.